Here is a 771-residue protein sequence, read N- to C-terminus: MIIDADYITEDGKPIIRIFKKEKGEFKVEYDRTFRPYIYALLKDDSAIDEVKKITAERHGKIVRITEVEKVQKKFLGRPIEVWKLYLEHPQDVPAIREKIREHPAVVDIFEYDIPFAKRYLIDKGLTPMEGNEELTFLAVDIETLYHEGEEFGKGPIIMISYADEEGAKVITWKSIDLPYVEVVSSEREMIKRLVKVIREKDPDVIITYNGDNFDFPYLLKRAEKLGIKLPLGRDNSEPKMQRMGDSLAVEIKGRIHFDLFPVIRRTINLPTYTLEAVYEAIFGKSKEKVYAHEIAEAWETGKGLERVAKYSMEDAKVTFELGKEFFPMEAQLARLVGQPVWDVSRSSTGNLVEWFLLRKAYERNELAPNKPDEREYERRLRESYEGGYVKEPEKGLWEGIVSLDFRSLYPSIIITHNVSPDTLNRENCKEYDVAPQVGHRFCKDFPGFIPSLLGNLLEERQKIKKRMKESKDPVEKKLLDYRQRAIKILANSYYGYYGYAKARWYCKECAESVTAWGRQYIDLVRRELESSGFKVLYIDTDGLYATIPGAKPNEIKEKALKFVEYINSKLPGLLELEYEGFYARGFFVTKKKYALIDEEGKIVTRGLEIVRRDWSEIAKETQAKVLEAILKHGNVDEAVKIVKEVTEKLSKYEIPPEKLVIYEQITRPLSEYKAIGPHVAVAKRLAAKGVKVKPGMVIGYIVLRGDGPISKRAIAIEEFDPKKHKYDAEYYIENQVLPAVERILRAFGYRKEDLRYQKTKQVGLGAWLKF.

The protein belongs to the DNA polymerase type-B family.

It catalyses the reaction DNA(n) + a 2'-deoxyribonucleoside 5'-triphosphate = DNA(n+1) + diphosphate. The polypeptide is DNA polymerase 1 (polI) (Pyrococcus abyssi).